A 145-amino-acid chain; its full sequence is 3-dehydroquinate dehydratase 1 (145 aa).

The Proton acceptor role is filled by Tyr-24. Residues Asn-75, His-81, and Asp-88 each contribute to the substrate site. The Proton donor role is filled by His-101. Substrate is bound by residues 102-103 (IS) and Arg-112.

The protein belongs to the type-II 3-dehydroquinase family. In terms of assembly, homododecamer.

The enzyme catalyses 3-dehydroquinate = 3-dehydroshikimate + H2O. It participates in metabolic intermediate biosynthesis; chorismate biosynthesis; chorismate from D-erythrose 4-phosphate and phosphoenolpyruvate: step 3/7. Its function is as follows. Catalyzes a trans-dehydration via an enolate intermediate. This chain is 3-dehydroquinate dehydratase 1 (aroQ1), found in Agrobacterium fabrum (strain C58 / ATCC 33970) (Agrobacterium tumefaciens (strain C58)).